Consider the following 356-residue polypeptide: Proline-rich protein 19 (356 aa).

A compositionally biased stretch (polar residues) spans 1–12 (MDTQGPVSQPFQ). Disordered stretches follow at residues 1 to 53 (MDTQ…RDPP), 95 to 143 (LVPG…ELSG), 216 to 255 (INSPDQVPEQERQRKQQGTKEFTFPMPYTSSMPTAHRGSL), and 312 to 331 (PSSPLLPRTSVLDWSPSPPS). Basic residues predominate over residues 19 to 29 (RVRRRKTRRER).

As to quaternary structure, interacts with CNTD1.

Its subcellular location is the nucleus. The protein resides in the chromosome. Promotes meiotic crossing over formation through its interaction with CNTD1 by participating in the crossover differentiation step of crossover-specific recombination intermediates. The protein is Proline-rich protein 19 of Homo sapiens (Human).